The sequence spans 452 residues: Xaa-Pro dipeptidase 1 (452 aa).

Mn(2+)-binding residues include aspartate 247, aspartate 258, histidine 338, glutamate 383, and glutamate 422.

The protein belongs to the peptidase M24B family. Bacterial-type prolidase subfamily. Mn(2+) serves as cofactor.

The enzyme catalyses Xaa-L-Pro dipeptide + H2O = an L-alpha-amino acid + L-proline. Splits dipeptides with a prolyl residue in the C-terminal position. This is Xaa-Pro dipeptidase 1 from Idiomarina loihiensis (strain ATCC BAA-735 / DSM 15497 / L2-TR).